Consider the following 115-residue polypeptide: Aspartate 1-decarboxylase (115 aa).

The active-site Schiff-base intermediate with substrate; via pyruvic acid is the S25. S25 is subject to Pyruvic acid (Ser). Substrate is bound at residue T57. The Proton donor role is filled by Y58. Position 71 to 73 (71 to 73 (GAA)) interacts with substrate.

The protein belongs to the PanD family. In terms of assembly, heterooctamer of four alpha and four beta subunits. Requires pyruvate as cofactor. Post-translationally, is synthesized initially as an inactive proenzyme, which is activated by self-cleavage at a specific serine bond to produce a beta-subunit with a hydroxyl group at its C-terminus and an alpha-subunit with a pyruvoyl group at its N-terminus.

The protein resides in the cytoplasm. The enzyme catalyses L-aspartate + H(+) = beta-alanine + CO2. Its pathway is cofactor biosynthesis; (R)-pantothenate biosynthesis; beta-alanine from L-aspartate: step 1/1. Functionally, catalyzes the pyruvoyl-dependent decarboxylation of aspartate to produce beta-alanine. In Campylobacter concisus (strain 13826), this protein is Aspartate 1-decarboxylase.